A 159-amino-acid chain; its full sequence is Ribosomal RNA large subunit methyltransferase H (159 aa).

S-adenosyl-L-methionine contacts are provided by residues Leu-76, Gly-108, and Phe-127–Phe-132.

Belongs to the RNA methyltransferase RlmH family. As to quaternary structure, homodimer.

It localises to the cytoplasm. The enzyme catalyses pseudouridine(1915) in 23S rRNA + S-adenosyl-L-methionine = N(3)-methylpseudouridine(1915) in 23S rRNA + S-adenosyl-L-homocysteine + H(+). In terms of biological role, specifically methylates the pseudouridine at position 1915 (m3Psi1915) in 23S rRNA. The protein is Ribosomal RNA large subunit methyltransferase H of Bacillus pumilus (strain SAFR-032).